A 1052-amino-acid chain; its full sequence is MREAAERRQQLQLEHDQALAVLSAKQQEIDLLQKSKVRELEEKCRTQSEQFNLLSRDLEKFRQHAGKIDLLGGSAVAPLDISTAPSKPFPQFMNGLATSLGKGQESAIGGSSAIGEYIRPLPQPGDRPEPLSAKPTFLSRSGSARCRSESDMENERNSNTSKQRYSGKVHLCVARYSYNPFDGPNENPEAELPLTAGKYLYVYGDMDEDGFYEGELLDGQRGLVPSNFVDFVQDNESRLASTLGNEQDQNFINHSGIGLEGEHILDLHSPTHIDAGITDNSAGTLDVNIDDIGEDIVPYPRKITLIKQLAKSVIVGWEPPAVPPGWGTVSSYNVLVDKETRMNLTLGSRTKALIEKLNMAACTYRISVQCVTSRGSSDELQCTLLVGKDVVVAPSHLRVDNITQISAQLSWLPTNSNYSHVIFLNEEEFDIVKAARYKYQFFNLRPNMAYKVKVLAKPHQMPWQLPLEQREKKEAFVEFSTLPAGPPAPPQDVTVQAGVTPATIRVSWRPPVLTPTGLSNGANVTGYGVYAKGQRVAEVIFPTADSTAVELVRLRSLEAKGVTVRTLSAQGESVDSAVAAVPPELLVPPTPHPRPAPQSKPLASSGVPETKDEHLGPHARMDEAWEQSRAPGPVHGHMLEPPVGPGRRSPSPSRILPQPQGTPVSTTVAKAMAREAAQRVAESSRLEKRSVFLERSSAGQYAASDEEDAYDSPDFKRRGASVDDFLKGSELGKQPHCCHGDEYHTESSRGSDLSDIMEEDEEELYSEMQLEDGGRRRPSGTSHNALKILGNPASAGRVDHMGRRFPRGSAGPQRSRPVTVPSIDDYGRDRLSPDFYEESETDPGAEELPARIFVALFDYDPLTMSPNPDAAEEELPFKEGQIIKVYGDKDADGFYRGETCARLGLIPCNMVSEIQADDEEMMDQLLRQGFLPLNTPVEKIERSRRSGRRHSVSTRRMVALYDYDPRESSPNVDVEAELTFCTGDIITVFGEIDEDGFYYGELNGQKGLVPSNFLEEVPDDVEVYLSDAPSHYSQDTPMRSKAKRKKSVHFTP.

The disordered stretch occupies residues G115–R164. Residues C146–R156 show a composition bias toward basic and acidic residues. Residues G167–D234 form the SH3 1 domain. Fibronectin type-III domains are found at residues V297 to V390, A393 to A475, and P489 to T590. Disordered stretches follow at residues E584–L615, R629–T666, S697–K716, E767–K787, and F805–D829. Pro residues predominate over residues L585–Q598. Residues P645–R654 are compositionally biased toward low complexity. S704 and S712 each carry phosphoserine. Residues S832 and S839 each carry the phosphoserine modification. T841 is subject to Phosphothreonine. SH3 domains follow at residues L848–A916 and V952–D1019. The disordered stretch occupies residues P1029–P1052. The span at S1040–P1052 shows a compositional bias: basic residues.

This sequence belongs to the RIMBP family. Interacts with RIMS1, RIMS2, CACNA1D and CACNA1B, and potentially with other Ca(2+) channel alpha-1 isoforms.

It localises to the cell membrane. Its subcellular location is the synapse. Plays a role in the synaptic transmission as bifunctional linker that interacts simultaneously with RIMS1, RIMS2, CACNA1D and CACNA1B. The protein is RIMS-binding protein 2 (RIMBP2) of Homo sapiens (Human).